A 138-amino-acid chain; its full sequence is Basic phospholipase A2 PLA-N (138 aa).

A signal peptide spans 1 to 16 (MRTLWIMAVLLVGVEG). Cystine bridges form between Cys-42/Cys-131, Cys-44/Cys-60, Cys-59/Cys-111, Cys-65/Cys-138, Cys-66/Cys-104, Cys-73/Cys-97, and Cys-91/Cys-102. Positions 43, 45, and 47 each coordinate Ca(2+). His-63 is a catalytic residue. Asp-64 contributes to the Ca(2+) binding site. The active site involves Asp-105.

This sequence belongs to the phospholipase A2 family. Group II subfamily. D49 sub-subfamily. The cofactor is Ca(2+). As to expression, expressed by the venom gland.

The protein resides in the secreted. It catalyses the reaction a 1,2-diacyl-sn-glycero-3-phosphocholine + H2O = a 1-acyl-sn-glycero-3-phosphocholine + a fatty acid + H(+). In terms of biological role, snake venom phospholipase A2 (PLA2) that displays edema-inducing activities, as well as presynaptic neurotoxicity and myotoxicity. PLA2 catalyzes the calcium-dependent hydrolysis of the 2-acyl groups in 3-sn-phosphoglycerides. This is Basic phospholipase A2 PLA-N from Protobothrops flavoviridis (Habu).